The chain runs to 376 residues: Probable dual-specificity RNA methyltransferase RlmN (376 aa).

Residues 1-25 (MSDSERTSLPLVFDEPRGRKKPPRH) are disordered. The active-site Proton acceptor is the E113. Residues 119 to 362 (YPDRATMCVS…PTTVRDTRGR (244 aa)) enclose the Radical SAM core domain. C126 and C368 form a disulfide bridge. C133, C137, and C140 together coordinate [4Fe-4S] cluster. S-adenosyl-L-methionine contacts are provided by residues 188–189 (GE), S222, 245–247 (SLH), and N325. C368 (S-methylcysteine intermediate) is an active-site residue.

It belongs to the radical SAM superfamily. RlmN family. It depends on [4Fe-4S] cluster as a cofactor.

It is found in the cytoplasm. The catalysed reaction is adenosine(2503) in 23S rRNA + 2 reduced [2Fe-2S]-[ferredoxin] + 2 S-adenosyl-L-methionine = 2-methyladenosine(2503) in 23S rRNA + 5'-deoxyadenosine + L-methionine + 2 oxidized [2Fe-2S]-[ferredoxin] + S-adenosyl-L-homocysteine. It catalyses the reaction adenosine(37) in tRNA + 2 reduced [2Fe-2S]-[ferredoxin] + 2 S-adenosyl-L-methionine = 2-methyladenosine(37) in tRNA + 5'-deoxyadenosine + L-methionine + 2 oxidized [2Fe-2S]-[ferredoxin] + S-adenosyl-L-homocysteine. In terms of biological role, specifically methylates position 2 of adenine 2503 in 23S rRNA and position 2 of adenine 37 in tRNAs. This Nocardioides sp. (strain ATCC BAA-499 / JS614) protein is Probable dual-specificity RNA methyltransferase RlmN.